Reading from the N-terminus, the 512-residue chain is MCEEGETYCPEVKDAKQAKSLGKICMKCKESSAALLIRAGDAFCKSCFKEYFVHKFRATLGKNRVIYPGEKVLLAYSGGPSSSAMVRQVQEGLSRDAPKKLRFVPGILFIDEGTACGMSWEERQQILSEICSVLQQTKIPFHIVSLEQVFSLPGSVLQRGAPEQRPNYKEEVDRFLVQEREQGDAGCSEMLERLEVTDSDSPGSSDKMYQSTCSRPPDMHTQKLKQLFASAKTLTAKQQLLHTLRSHLILHIARTCGYSKVMTGESCTRLSIRLLSNVSLGRGAFLPLDTGFCDSRYGDVDIIRPMREYSSKEIAYYNRFFNVLPIFIPALDTKASENSSIQHLTEVFVNRLQADFPSTVSTLYRTSEKLNVSIIDADQETCAKDRCLLCLSPLDTQAGKASAFSATQLSHHLSQKIPMKSNDLANNSDKSCCQGGQGCKEAGYGDTCQSRALQTPSFVHMLCYSCRLTVKDMQSLDVLPQYVLHEAEYRCHRTEMRKEIQEFLLEEDDGDS.

Positions 196 to 215 (VTDSDSPGSSDKMYQSTCSR) are disordered. Residues 199 to 214 (SDSPGSSDKMYQSTCS) show a composition bias toward polar residues.

It belongs to the CTU2/NCS2 family.

The protein resides in the cytoplasm. It participates in tRNA modification; 5-methoxycarbonylmethyl-2-thiouridine-tRNA biosynthesis. Plays a central role in 2-thiolation of mcm(5)S(2)U at tRNA wobble positions of tRNA(Lys), tRNA(Glu) and tRNA(Gln). May act by forming a heterodimer with ctu1/atpbd3 that ligates sulfur from thiocarboxylated urm1 onto the uridine of tRNAs at wobble position. The chain is Cytoplasmic tRNA 2-thiolation protein 2-B (ctu2-b) from Xenopus laevis (African clawed frog).